The following is a 237-amino-acid chain: Phosphoserine phosphatase (237 aa).

Asp39 serves as the catalytic Nucleophile. The Mg(2+) site is built by Asp39 and Glu41. Glu41 serves as the catalytic Proton donor. Substrate is bound by residues Glu47, Arg78, 122-123 (SD), and Lys165. Asp184 contributes to the Mg(2+) binding site. Asn187 is a binding site for substrate.

It belongs to the thrH family. The cofactor is Mg(2+).

The catalysed reaction is O-phospho-L-serine + H2O = L-serine + phosphate. It carries out the reaction O-phospho-D-serine + H2O = D-serine + phosphate. It functions in the pathway amino-acid biosynthesis; L-serine biosynthesis; L-serine from 3-phospho-D-glycerate: step 3/3. Phosphoserine phosphatase that mediates dephosphorylation of phosphoserine in the serine biosynthesis pathway. Also able to dephosphorylate phospho-threonine. The sequence is that of Phosphoserine phosphatase from Pseudomonas syringae pv. tomato (strain ATCC BAA-871 / DC3000).